The sequence spans 172 residues: MNRPNRINEEIRVKEVRLIDQNGEQAGIVSIQQALEMMAEQAELDLVEISPNAEPPVCRIMNYGKFLYEKSKTAKEQKKKQKVVQVKEIKFRPGTDEGDYQVKLRSLIRFLEDGDKAKITVRFRGREMAHQDIGLDVLERVKNDLAEISVVESAPGKLEGRQAVMVLAPKKK.

Belongs to the IF-3 family. As to quaternary structure, monomer.

It localises to the cytoplasm. IF-3 binds to the 30S ribosomal subunit and shifts the equilibrium between 70S ribosomes and their 50S and 30S subunits in favor of the free subunits, thus enhancing the availability of 30S subunits on which protein synthesis initiation begins. The sequence is that of Translation initiation factor IF-3 from Haemophilus influenzae (strain ATCC 51907 / DSM 11121 / KW20 / Rd).